A 689-amino-acid polypeptide reads, in one-letter code: DNA ligase (689 aa).

NAD(+) is bound by residues 40 to 44 (DAEYD), 89 to 90 (SL), and E121. The N6-AMP-lysine intermediate role is filled by K123. 4 residues coordinate NAD(+): R144, E179, K295, and K319. The Zn(2+) site is built by C413, C416, C431, and C437. A BRCT domain is found at 610–689 (RAQSSLTGKI…EEWLTLIKNA (80 aa)).

It belongs to the NAD-dependent DNA ligase family. LigA subfamily. Requires Mg(2+) as cofactor. Mn(2+) serves as cofactor.

The catalysed reaction is NAD(+) + (deoxyribonucleotide)n-3'-hydroxyl + 5'-phospho-(deoxyribonucleotide)m = (deoxyribonucleotide)n+m + AMP + beta-nicotinamide D-nucleotide.. Functionally, DNA ligase that catalyzes the formation of phosphodiester linkages between 5'-phosphoryl and 3'-hydroxyl groups in double-stranded DNA using NAD as a coenzyme and as the energy source for the reaction. It is essential for DNA replication and repair of damaged DNA. This Rickettsia akari (strain Hartford) protein is DNA ligase.